The sequence spans 473 residues: MAACVGSRTLSKDDVNYRLHFRMINEQQVEDITLEFFYRPHTITLLSFTILSLMAFAFTRDDSVPEENIWRGILSVIFFFLIISVLAFPNGPFTRPHPAIWRMVFGLSVLYFLFLVFVLFLNFEQVKAVMYWLDPNLRYATREADIMEYAVNCHVITWERILSHFDIFAFGHFWGWAMKALLIRSYGLCWTISITWELTELFFMHLLPNFAECWWDQVILDILLCNGGGIWLGMVVCRFLEMRTYHWASFKDIHTTTGKIKRAVLQFTPASWTYVRWFDPKSSFQRVAGIYLFMIIWQLTELNTFFLKHIFVFQASHPLSWGRILFIGIITAPTVRQYYAYLTDTQCKRVGTQCWVFGVIAFLEAIVCIKFGQDLFSKTQILYVVFWLLCVAFTTFLCLYGMVWYAEYYGHREKTLSESEDSPYSPDASWLHSKFSKGADNSPPKHPVNSESHSSRRRNRHSRSKVTNGIGKK.

The Cytoplasmic portion of the chain corresponds to 1–35 (MAACVGSRTLSKDDVNYRLHFRMINEQQVEDITLE). The helical transmembrane segment at 36–56 (FFYRPHTITLLSFTILSLMAF) threads the bilayer. The Lumenal portion of the chain corresponds to 57 to 72 (AFTRDDSVPEENIWRG). Residues 73-93 (ILSVIFFFLIISVLAFPNGPF) form a helical membrane-spanning segment. The Cytoplasmic portion of the chain corresponds to 94–102 (TRPHPAIWR). A helical membrane pass occupies residues 103–123 (MVFGLSVLYFLFLVFVLFLNF). The Lumenal segment spans residues 124 to 186 (EQVKAVMYWL…AMKALLIRSY (63 aa)). The helical transmembrane segment at 187–207 (GLCWTISITWELTELFFMHLL) threads the bilayer. Over 208 to 216 (PNFAECWWD) the chain is Cytoplasmic. Residues 217 to 237 (QVILDILLCNGGGIWLGMVVC) traverse the membrane as a helical segment. Residues 238 to 286 (RFLEMRTYHWASFKDIHTTTGKIKRAVLQFTPASWTYVRWFDPKSSFQR) lie on the Lumenal side of the membrane. The helical transmembrane segment at 287–307 (VAGIYLFMIIWQLTELNTFFL) threads the bilayer. Topologically, residues 308-319 (KHIFVFQASHPL) are cytoplasmic. Residues 320–342 (SWGRILFIGIITAPTVRQYYAYL) form a helical membrane-spanning segment. The Lumenal portion of the chain corresponds to 343 to 355 (TDTQCKRVGTQCW). A helical membrane pass occupies residues 356-376 (VFGVIAFLEAIVCIKFGQDLF). The Cytoplasmic segment spans residues 377 to 380 (SKTQ). The chain crosses the membrane as a helical span at residues 381–401 (ILYVVFWLLCVAFTTFLCLYG). Residues 402-473 (MVWYAEYYGH…SKVTNGIGKK (72 aa)) lie on the Lumenal side of the membrane. The tract at residues 420-473 (EDSPYSPDASWLHSKFSKGADNSPPKHPVNSESHSSRRRNRHSRSKVTNGIGKK) is disordered. The segment covering 455 to 464 (SRRRNRHSRS) has biased composition (basic residues).

This sequence belongs to the phosphatidyl serine synthase family.

Its subcellular location is the endoplasmic reticulum membrane. It carries out the reaction a 1,2-diacyl-sn-glycero-3-phosphoethanolamine + L-serine = a 1,2-diacyl-sn-glycero-3-phospho-L-serine + ethanolamine. It catalyses the reaction a 1,2-diacyl-sn-glycero-3-phosphocholine + L-serine = a 1,2-diacyl-sn-glycero-3-phospho-L-serine + choline. It functions in the pathway phospholipid metabolism; phosphatidylserine biosynthesis. Its function is as follows. Catalyzes a base-exchange reaction in which the polar head group of phosphatidylethanolamine (PE) or phosphatidylcholine (PC) is replaced by L-serine. Catalyzes mainly the conversion of phosphatidylcholine but also converts, in vitro and to a lesser extent, phosphatidylethanolamine. This Gallus gallus (Chicken) protein is Phosphatidylserine synthase 1 (PTDSS1).